A 180-amino-acid chain; its full sequence is Large ribosomal subunit protein uL5 (180 aa).

It belongs to the universal ribosomal protein uL5 family. As to quaternary structure, part of the 50S ribosomal subunit; part of the 5S rRNA/L5/L18/L25 subcomplex. Contacts the 5S rRNA and the P site tRNA. Forms a bridge to the 30S subunit in the 70S ribosome.

Functionally, this is one of the proteins that bind and probably mediate the attachment of the 5S RNA into the large ribosomal subunit, where it forms part of the central protuberance. In the 70S ribosome it contacts protein S13 of the 30S subunit (bridge B1b), connecting the 2 subunits; this bridge is implicated in subunit movement. Contacts the P site tRNA; the 5S rRNA and some of its associated proteins might help stabilize positioning of ribosome-bound tRNAs. In Polynucleobacter asymbioticus (strain DSM 18221 / CIP 109841 / QLW-P1DMWA-1) (Polynucleobacter necessarius subsp. asymbioticus), this protein is Large ribosomal subunit protein uL5.